The primary structure comprises 456 residues: Glycerol-3-phosphate acyltransferase 4 (456 aa).

An N-terminal signal peptide occupies residues 1–37 (MFLLLPFDSLIVNLLGISLTVLFTLLLVFIIVPAIFG). 2 helical membrane-spanning segments follow: residues 156-176 (ISLR…CFLL) and 180-200 (IALA…VGYL). N-linked (GlcNAc...) asparagine glycosylation occurs at Asn247. The short motif at 248–253 (HTSPID) is the HXXXXD motif element. N-linked (GlcNAc...) asparagine glycans are attached at residues Asn327, Asn328, and Asn362.

The protein belongs to the 1-acyl-sn-glycerol-3-phosphate acyltransferase family.

It localises to the endoplasmic reticulum membrane. The enzyme catalyses sn-glycerol 3-phosphate + an acyl-CoA = a 1-acyl-sn-glycero-3-phosphate + CoA. It catalyses the reaction dodecanoyl-CoA + sn-glycerol 3-phosphate = 1-dodecanoyl-sn-glycerol 3-phosphate + CoA. The catalysed reaction is sn-glycerol 3-phosphate + hexadecanoyl-CoA = 1-hexadecanoyl-sn-glycero-3-phosphate + CoA. It carries out the reaction sn-glycerol 3-phosphate + octadecanoyl-CoA = 1-octadecanoyl-sn-glycero-3-phosphate + CoA. The enzyme catalyses sn-glycerol 3-phosphate + (9Z)-octadecenoyl-CoA = 1-(9Z-octadecenoyl)-sn-glycero-3-phosphate + CoA. It catalyses the reaction (9Z,12Z)-octadecadienoyl-CoA + sn-glycerol 3-phosphate = 1-(9Z,12Z)-octadecadienoyl-sn-glycero-3-phosphate + CoA. It participates in phospholipid metabolism; CDP-diacylglycerol biosynthesis; CDP-diacylglycerol from sn-glycerol 3-phosphate: step 1/3. In terms of biological role, converts glycerol-3-phosphate to 1-acyl-sn-glycerol-3-phosphate (lysophosphatidic acid or LPA) by incorporating an acyl moiety at the sn-1 position of the glycerol backbone. Active against both saturated and unsaturated long-chain fatty acyl-CoAs. Protects cells against lipotoxicity. In Pongo abelii (Sumatran orangutan), this protein is Glycerol-3-phosphate acyltransferase 4.